We begin with the raw amino-acid sequence, 965 residues long: Glycine dehydrogenase (decarboxylating) (965 aa).

Lysine 711 carries the N6-(pyridoxal phosphate)lysine modification.

Belongs to the GcvP family. As to quaternary structure, the glycine cleavage system is composed of four proteins: P, T, L and H. Pyridoxal 5'-phosphate is required as a cofactor.

It carries out the reaction N(6)-[(R)-lipoyl]-L-lysyl-[glycine-cleavage complex H protein] + glycine + H(+) = N(6)-[(R)-S(8)-aminomethyldihydrolipoyl]-L-lysyl-[glycine-cleavage complex H protein] + CO2. Functionally, the glycine cleavage system catalyzes the degradation of glycine. The P protein binds the alpha-amino group of glycine through its pyridoxal phosphate cofactor; CO(2) is released and the remaining methylamine moiety is then transferred to the lipoamide cofactor of the H protein. In Psychrobacter arcticus (strain DSM 17307 / VKM B-2377 / 273-4), this protein is Glycine dehydrogenase (decarboxylating).